Here is a 141-residue protein sequence, read N- to C-terminus: Hemoglobin subunit alpha (141 aa).

Residues 1–141 (VLSADDKANV…VSTVLTSKYR (141 aa)) enclose the Globin domain. Ser3 is modified (phosphoserine). Residues Lys7 and Lys11 each carry the N6-succinyllysine modification. Residue Lys16 is modified to N6-acetyllysine; alternate. Residue Lys16 is modified to N6-succinyllysine; alternate. Tyr24 is modified (phosphotyrosine). Ser35 carries the post-translational modification Phosphoserine. N6-succinyllysine is present on Lys40. Ser49 carries the post-translational modification Phosphoserine. His58 is an O2 binding site. His87 lines the heme b pocket. At Ser102 the chain carries Phosphoserine. A Phosphothreonine modification is found at Thr108. Phosphoserine is present on residues Ser124 and Ser131. Phosphothreonine occurs at positions 134 and 137. Ser138 carries the post-translational modification Phosphoserine.

This sequence belongs to the globin family. In terms of assembly, heterotetramer of two alpha chains and two beta chains. In terms of tissue distribution, red blood cells.

Its function is as follows. Involved in oxygen transport from the lung to the various peripheral tissues. The polypeptide is Hemoglobin subunit alpha (Peromyscus californicus (California mouse)).